Reading from the N-terminus, the 819-residue chain is Sulfate permease 2 (819 aa).

A glycan (N-linked (GlcNAc...) asparagine) is linked at asparagine 24. The next 10 helical transmembrane spans lie at 72–92 (YNLTWLLGDFIAGVTVGFVVV), 104–124 (LAPEYGLYTSFVGFVLYWAFA), 129–149 (ITIGAVAVMSTIVGNIIANVQ), 172–192 (LLFLGLIRFGFIVEFIPIVAI), 194–214 (AFMTGSAISIAAGQVSTLMGI), 273–293 (FFVSTLRMVFIIILYILVSWL), 328–348 (ILSAISGDIPTTILVLLIEHI), 365–385 (SQELVAIGFTNLLGPFLGGYP), 454–474 (FWLTSPLEVVIFFAGVFVSIF), and 477–497 (IENGIYVTVAASGAVLLWRIA). The 158-residue stretch at 551–708 (ELQISTPWPG…ENHKGGVQEV (158 aa)) folds into the STAS domain. Asparagine 581 is a glycosylation site (N-linked (GlcNAc...) asparagine). The disordered stretch occupies residues 726–766 (EAVPVGTSGSGSTDEKRPEGEGGATNGGMEKGSANGEDIST). A compositionally biased stretch (gly residues) spans 746–755 (EGGATNGGME).

It belongs to the SLC26A/SulP transporter (TC 2.A.53) family. As to expression, mainly found in mycelia.

It is found in the membrane. In terms of biological role, uptake of sulfate into the cell. In Neurospora crassa (strain ATCC 24698 / 74-OR23-1A / CBS 708.71 / DSM 1257 / FGSC 987), this protein is Sulfate permease 2 (cys-14).